A 112-amino-acid polypeptide reads, in one-letter code: Cytochrome c2 (112 aa).

4 residues coordinate heme c: Cys14, Cys17, His18, and Met91.

Belongs to the cytochrome c family. Post-translationally, binds 1 heme c group covalently per subunit.

Its function is as follows. Cytochrome c2 is found mainly in purple, non-sulfur, photosynthetic bacteria where it functions as the electron donor to the oxidized bacteriochlorophyll in the photophosphorylation pathway. However, it may also have a role in the respiratory chain and is found in some non-photosynthetic bacteria. The chain is Cytochrome c2 (cycA) from Rhodospirillum rubrum.